The primary structure comprises 197 residues: Dephospho-CoA kinase (197 aa).

The DPCK domain occupies 3 to 197; that stretch reads VLGLTGSIGL…IDELRGQRGS (195 aa). 11-16 contributes to the ATP binding site; the sequence is GLGKST.

Belongs to the CoaE family.

Its subcellular location is the cytoplasm. It catalyses the reaction 3'-dephospho-CoA + ATP = ADP + CoA + H(+). It functions in the pathway cofactor biosynthesis; coenzyme A biosynthesis; CoA from (R)-pantothenate: step 5/5. In terms of biological role, catalyzes the phosphorylation of the 3'-hydroxyl group of dephosphocoenzyme A to form coenzyme A. This Mesorhizobium japonicum (strain LMG 29417 / CECT 9101 / MAFF 303099) (Mesorhizobium loti (strain MAFF 303099)) protein is Dephospho-CoA kinase.